We begin with the raw amino-acid sequence, 87 residues long: Diazepam-binding inhibitor-like 5 (87 aa).

The 86-residue stretch at 2–87 (SQVEFEMACA…VEELKKKEPC (86 aa)) folds into the ACB domain. An acyl-CoA is bound by residues 29-33 (YSFYK), lysine 55, and tyrosine 74.

The protein belongs to the ACBP family. As to expression, exclusively expressed in late spermatids and spermatozoa. Not found in epididymis, spleen, bone marrow, skin, liver, brain, heart, kidney, muscle.

It localises to the cytoplasm. May be involved in the energy metabolism of the mature sperm. This is Diazepam-binding inhibitor-like 5 (Dbil5) from Mus musculus (Mouse).